The sequence spans 426 residues: ORC1-type DNA replication protein 1 (426 aa).

Residues 62-66 (VGKTL), Tyr211, and Arg223 each bind ATP.

Belongs to the CDC6/cdc18 family.

Its function is as follows. Involved in regulation of DNA replication. The sequence is that of ORC1-type DNA replication protein 1 (cdc6a) from Haloarcula marismortui (strain ATCC 43049 / DSM 3752 / JCM 8966 / VKM B-1809) (Halobacterium marismortui).